We begin with the raw amino-acid sequence, 130 residues long: Small ribosomal subunit protein uS9 (130 aa).

The segment at 109-130 (RMKERKKYGLKGARRAPQFSKR) is disordered. The segment covering 111-130 (KERKKYGLKGARRAPQFSKR) has biased composition (basic residues).

The protein belongs to the universal ribosomal protein uS9 family.

The protein is Small ribosomal subunit protein uS9 of Alkaliphilus metalliredigens (strain QYMF).